A 420-amino-acid polypeptide reads, in one-letter code: Tryptophan synthase beta chain (420 aa).

Residue K100 is modified to N6-(pyridoxal phosphate)lysine.

It belongs to the TrpB family. As to quaternary structure, tetramer of two alpha and two beta chains. Pyridoxal 5'-phosphate is required as a cofactor.

It carries out the reaction (1S,2R)-1-C-(indol-3-yl)glycerol 3-phosphate + L-serine = D-glyceraldehyde 3-phosphate + L-tryptophan + H2O. Its pathway is amino-acid biosynthesis; L-tryptophan biosynthesis; L-tryptophan from chorismate: step 5/5. Its function is as follows. The beta subunit is responsible for the synthesis of L-tryptophan from indole and L-serine. The sequence is that of Tryptophan synthase beta chain from Pyrobaculum islandicum (strain DSM 4184 / JCM 9189 / GEO3).